Here is a 212-residue protein sequence, read N- to C-terminus: Large ribosomal subunit protein uL3 (212 aa).

Positions 127–153 (FRGGPATHGQSDRHRAPGSIGSGTTPG) are disordered.

This sequence belongs to the universal ribosomal protein uL3 family. In terms of assembly, part of the 50S ribosomal subunit. Forms a cluster with proteins L14 and L19.

Its function is as follows. One of the primary rRNA binding proteins, it binds directly near the 3'-end of the 23S rRNA, where it nucleates assembly of the 50S subunit. This Herpetosiphon aurantiacus (strain ATCC 23779 / DSM 785 / 114-95) protein is Large ribosomal subunit protein uL3.